The sequence spans 491 residues: Cobyric acid synthase (491 aa).

The GATase cobBQ-type domain occupies E250–W439. Catalysis depends on C331, which acts as the Nucleophile. H431 is a catalytic residue.

This sequence belongs to the CobB/CobQ family. CobQ subfamily.

It participates in cofactor biosynthesis; adenosylcobalamin biosynthesis. Its function is as follows. Catalyzes amidations at positions B, D, E, and G on adenosylcobyrinic A,C-diamide. NH(2) groups are provided by glutamine, and one molecule of ATP is hydrogenolyzed for each amidation. The chain is Cobyric acid synthase from Microcystis aeruginosa (strain NIES-843 / IAM M-2473).